A 153-amino-acid polypeptide reads, in one-letter code: SsrA-binding protein (153 aa).

This sequence belongs to the SmpB family.

It is found in the cytoplasm. Functionally, required for rescue of stalled ribosomes mediated by trans-translation. Binds to transfer-messenger RNA (tmRNA), required for stable association of tmRNA with ribosomes. tmRNA and SmpB together mimic tRNA shape, replacing the anticodon stem-loop with SmpB. tmRNA is encoded by the ssrA gene; the 2 termini fold to resemble tRNA(Ala) and it encodes a 'tag peptide', a short internal open reading frame. During trans-translation Ala-aminoacylated tmRNA acts like a tRNA, entering the A-site of stalled ribosomes, displacing the stalled mRNA. The ribosome then switches to translate the ORF on the tmRNA; the nascent peptide is terminated with the 'tag peptide' encoded by the tmRNA and targeted for degradation. The ribosome is freed to recommence translation, which seems to be the essential function of trans-translation. This chain is SsrA-binding protein, found in Pelotomaculum thermopropionicum (strain DSM 13744 / JCM 10971 / SI).